Reading from the N-terminus, the 174-residue chain is MNYFELFKFSPAFDIDTAVLAERYRELQRAVHPDKFANDTEQQRLLSVQRTAQVNDGYQTLKDPIRRAEHMLSLRGIDLSHETTTVKDTAFLMQQMEWREALEDIRDSADPQECIDELYDSFAAYRTKLTKLLTAQLSSDSEEDALLAADQVRKLKFMAKLHDELTRIEDALLD.

One can recognise a J domain in the interval 2–74 (NYFELFKFSP…IRRAEHMLSL (73 aa)).

It belongs to the HscB family. As to quaternary structure, interacts with HscA and stimulates its ATPase activity.

Functionally, co-chaperone involved in the maturation of iron-sulfur cluster-containing proteins. Seems to help targeting proteins to be folded toward HscA. This Shewanella sp. (strain MR-4) protein is Co-chaperone protein HscB homolog.